The sequence spans 601 residues: Elongation factor 4 (601 aa).

Residues 8 to 189 enclose the tr-type G domain; the sequence is EQIRNFGIIA…LIVRKAPPPK (182 aa). GTP is bound at residue 20–25; it reads DHGKST.

It belongs to the TRAFAC class translation factor GTPase superfamily. Classic translation factor GTPase family. LepA subfamily.

It localises to the cell membrane. It catalyses the reaction GTP + H2O = GDP + phosphate + H(+). Its function is as follows. Required for accurate and efficient protein synthesis under certain stress conditions. May act as a fidelity factor of the translation reaction, by catalyzing a one-codon backward translocation of tRNAs on improperly translocated ribosomes. Back-translocation proceeds from a post-translocation (POST) complex to a pre-translocation (PRE) complex, thus giving elongation factor G a second chance to translocate the tRNAs correctly. Binds to ribosomes in a GTP-dependent manner. The protein is Elongation factor 4 of Tropheryma whipplei (strain Twist) (Whipple's bacillus).